Consider the following 206-residue polypeptide: Large ribosomal subunit protein mL62 (206 aa).

A mitochondrion-targeting transit peptide spans 1–29 (MAAARCLRWGLSRAEAWLLPPPTSCCHRA). Residue Gln90 is modified to N5-methylglutamine.

The protein belongs to the prokaryotic/mitochondrial release factor family. Mitochondrion-specific ribosomal protein mL62 subfamily. Component of the mitochondrial ribosome large subunit (39S) which comprises a 16S rRNA and about 50 distinct proteins. Methylation of glutamine in the GGQ triplet by HEMK1.

Its subcellular location is the mitochondrion. It carries out the reaction an N-acyl-L-alpha-aminoacyl-tRNA + H2O = an N-acyl-L-amino acid + a tRNA + H(+). Essential peptidyl-tRNA hydrolase component of the mitochondrial large ribosomal subunit. Acts as a codon-independent translation release factor that has lost all stop codon specificity and directs the termination of translation in mitochondrion, possibly in case of abortive elongation. May be involved in the hydrolysis of peptidyl-tRNAs that have been prematurely terminated and thus in the recycling of stalled mitochondrial ribosomes. This chain is Large ribosomal subunit protein mL62, found in Bos taurus (Bovine).